The following is a 559-amino-acid chain: Putative helicase 22 (559 aa).

The Helicase ATP-binding domain occupies 186 to 347 (VSDVNVIGNG…EIMGLLGKIS (162 aa)). 199–206 (APTGSGKS) contacts ATP. The DEAH box signature appears at 300 to 303 (DEAH). One can recognise a Helicase C-terminal domain in the interval 410–552 (TNKQIISKIK…KMNFIENEYN (143 aa)).

The protein is Putative helicase 22 (SIFV0022) of Sulfolobus islandicus filamentous virus (isolate Iceland/Hveragerdi) (SIFV).